A 334-amino-acid chain; its full sequence is uncharacterized protein (334 aa).

A substrate-binding site is contributed by Ser-126. Tyr-151 (proton acceptor) is an active-site residue.

This sequence belongs to the NAD(P)-dependent epimerase/dehydratase family. dTDP-glucose dehydratase subfamily.

This is an uncharacterized protein from Escherichia coli O111:H-.